A 278-amino-acid polypeptide reads, in one-letter code: Large ribosomal subunit protein uL2 (278 aa).

Residues 226 to 278 (MNPIDHPHGGGEGKTAAGRHPVSPWGTPSKGSRTRKNKRTSNMIVRSRYSKKG) form a disordered region.

The protein belongs to the universal ribosomal protein uL2 family. In terms of assembly, part of the 50S ribosomal subunit. Forms a bridge to the 30S subunit in the 70S ribosome.

Its function is as follows. One of the primary rRNA binding proteins. Required for association of the 30S and 50S subunits to form the 70S ribosome, for tRNA binding and peptide bond formation. It has been suggested to have peptidyltransferase activity; this is somewhat controversial. Makes several contacts with the 16S rRNA in the 70S ribosome. The protein is Large ribosomal subunit protein uL2 of Nitrosomonas europaea (strain ATCC 19718 / CIP 103999 / KCTC 2705 / NBRC 14298).